The primary structure comprises 271 residues: MYVWVQQPTAFLLLGLSLGVTVKLNCVKDTYPSGHKCCRECQPGHGMVSRCDHTRDTVCHPCEPGFYNEAVNYDTCKQCTQCNHRSGSELKQNCTPTEDTVCQCRPGTQPRQDSSHKLGVDCVPCPPGHFSPGSNQACKPWTNCTLSGKQIRHPASNSLDTVCEDRSLLATLLWETQRTTFRPTTVPSTTVWPRTSQLPSTPTLVAPEGPAFAVILGLGLGLLAPLTVLLALYLLRKAWRSPNTPKPCWGNSFRTPIQEEQTDTHFTLAKI.

Residues 1 to 19 (MYVWVQQPTAFLLLGLSLG) form the signal peptide. The Extracellular segment spans residues 20–210 (VTVKLNCVKD…TPTLVAPEGP (191 aa)). TNFR-Cys repeat units follow at residues 25 to 60 (NCVK…TVCH) and 61 to 102 (PCEP…DTVC). Cystine bridges form between Cys-26/Cys-37, Cys-38/Cys-51, Cys-41/Cys-59, Cys-62/Cys-76, Cys-79/Cys-94, Cys-82/Cys-102, Cys-104/Cys-122, and Cys-125/Cys-138. A TNFR-Cys 3; truncated repeat occupies 103–123 (QCRPGTQPRQDSSHKLGVDCV). One copy of the TNFR-Cys 4 repeat lies at 124-164 (PCPPGHFSPGSNQACKPWTNCTLSGKQIRHPASNSLDTVCE). A glycan (N-linked (GlcNAc...) asparagine) is linked at Asn-143. Cys-144 and Cys-163 are oxidised to a cystine. The helical transmembrane segment at 211-235 (AFAVILGLGLGLLAPLTVLLALYLL) threads the bilayer. The Cytoplasmic portion of the chain corresponds to 236-271 (RKAWRSPNTPKPCWGNSFRTPIQEEQTDTHFTLAKI).

Interacts with TRAF2, TRAF3 and TRAF5. In terms of tissue distribution, activated T-cells.

It localises to the membrane. Functionally, receptor for TNFSF4/OX40L/GP34. Is a costimulatory molecule implicated in long-term T-cell immunity. The sequence is that of Tumor necrosis factor receptor superfamily member 4 (Tnfrsf4) from Rattus norvegicus (Rat).